Reading from the N-terminus, the 652-residue chain is DNA mismatch repair protein MutL (652 aa).

Disordered regions lie at residues 357-377 and 425-457; these read LGAN…NYPS and PDKG…NSTD. Polar residues predominate over residues 365–375; sequence SHSSNTPTLNY.

It belongs to the DNA mismatch repair MutL/HexB family.

Functionally, this protein is involved in the repair of mismatches in DNA. It is required for dam-dependent methyl-directed DNA mismatch repair. May act as a 'molecular matchmaker', a protein that promotes the formation of a stable complex between two or more DNA-binding proteins in an ATP-dependent manner without itself being part of a final effector complex. The chain is DNA mismatch repair protein MutL from Colwellia psychrerythraea (strain 34H / ATCC BAA-681) (Vibrio psychroerythus).